Here is a 375-residue protein sequence, read N- to C-terminus: Growth/differentiation factor 8 (375 aa).

Positions 1–23 are cleaved as a signal peptide; it reads MQKIVVYVYIYLFVQISVDPVAL. The propeptide occupies 24–266; it reads DGSSQPTENT…VTDTPKRSRR (243 aa). An N-linked (GlcNAc...) asparagine glycan is attached at Asn-71. 4 cysteine pairs are disulfide-bonded: Cys-272–Cys-282, Cys-281–Cys-340, Cys-309–Cys-372, and Cys-313–Cys-374.

It belongs to the TGF-beta family. Homodimer; disulfide-linked.

Its subcellular location is the secreted. In terms of biological role, acts specifically as a negative regulator of skeletal muscle growth. The protein is Growth/differentiation factor 8 (MSTN) of Coturnix coturnix (Common quail).